The following is a 349-amino-acid chain: GDSL esterase/lipase At2g19050 (349 aa).

The N-terminal stretch at 1–23 (MAEAIFKALLLVIATTAFATTEA) is a signal peptide. The active-site Nucleophile is the S38. N49 carries an N-linked (GlcNAc...) asparagine glycan. Residues D316 and H319 contribute to the active site.

The protein belongs to the 'GDSL' lipolytic enzyme family.

Its subcellular location is the secreted. The protein is GDSL esterase/lipase At2g19050 of Arabidopsis thaliana (Mouse-ear cress).